A 955-amino-acid polypeptide reads, in one-letter code: MLFEDRQKNRSTGPTLIGFNQTQNEHENTVCPTHPESSDRILKIKEALTKTKILEKCTVLTNFLEIDDADLEVTHDKSMVKDLMESEKKTQEDINSQCEKYDSVFMTENSMKVAKDGVACVRDLTNRIMANEASNGFAVVRPPGHHADSVSPCGFCLFNNVAQAAEEAFFSGAERILIVDLDVHHGHGTQRIFYDDKRVLYFSIHRHEHGLFWPHLPESDFDHIGSGKGLGYNANLALNETGCTDSDYLSIIFHVLLPLATQFDPHFVIISAGFDALLGDPLGGMCLTPDGYSHILYHLKSLAQGRMLVVLEGGYNHQISAVAVQRCVRVLLGYAPFSIELNEAPKESTVDSCVSLVSVLRHHWNCFDYFPSRTSLRLAQWPIVNTKVIYNYDPTTRRADTGEIIQDELASTEFTASDVIPTENMETLIYFNEGDDAHFDLEEDNHPEKPARTRRILKTLRESGVLEKCVDRNCERIATNEEIRLVHTKKMLEHLRTTETMKDEELMEEAEKEFNSIYLTRDTLKVARKAVGAVLQSVDEIFEKDAGQRNALVIVRPPGHHASASKSSGFCIFNNVAVAAKYAQRRHKAKRVLILDWDVHHGNGTQEIFYEDSNVMYMSIHRHDKGNFYPIGEPKDYSDVGEGAGEGMSVNVPFSGVQMGDNEYQMAFQRVIMPIAYQFNPDLVLISAGFDAAVDDPLGEYKVTPETFALMTYQLSSLAGGRIITVLEGGYNLTSISNSAQAVCEVLQNRSMLRRLREEKEQFATKPQKIESSCIKTIREVCAVQQKYWSILKGFQVTPSNYGLDIDDEAYDDDSIDMADQSSSSGSSSSSTRPSHNLEIMDSGPAHAVVPLATCPHLKEVKPLPPAKINARTACSECQIGAEVWTCLTCYKYNCGRFVNEHAMMHHLSSSHPMALSMADLSVWCYPCDSYVHNPALIGAKSAAHESKFGETMPS.

Histone deacetylase stretches follow at residues 15–337 (TLIG…YAPF) and 425–749 (METL…VLQN). The active-site 1 is H146. H561 functions as the 2 in the catalytic mechanism. Residues 815–840 (SIDMADQSSSSGSSSSSTRPSHNLEI) form a disordered region. Residues 818–831 (MADQSSSSGSSSSS) show a composition bias toward low complexity. The UBP-type zinc finger occupies 853 to 951 (ATCPHLKEVK…SAAHESKFGE (99 aa)). 7 residues coordinate Zn(2+): C855, H857, C875, C878, C887, C890, and C895. The interval 896–898 (GRF) is ubiquitin binding. H902, H906, H912, C925, and C928 together coordinate Zn(2+). A ubiquitin binding region spans residues 924-931 (WCYPCDSY).

It belongs to the histone deacetylase family. HD type 2 subfamily. Zn(2+) serves as cofactor.

The protein resides in the nucleus. The catalysed reaction is N(6)-acetyl-L-lysyl-[histone] + H2O = L-lysyl-[histone] + acetate. Its function is as follows. Probable histone deacetylase. Histone deacetylases are responsible for the deacetylation of lysine residues on the N-terminal part of the core histones (H2A, H2B, H3 and H4). Histone deacetylation gives a tag for epigenetic repression and plays an important role in transcriptional regulation, cell cycle progression and developmental events. Histone deacetylases act via the formation of large multiprotein complexes. The sequence is that of Histone deacetylase 6 (hda-6) from Caenorhabditis elegans.